The chain runs to 41 residues: Large ribosomal subunit protein bL36 (41 aa).

This sequence belongs to the bacterial ribosomal protein bL36 family.

The polypeptide is Large ribosomal subunit protein bL36 (Gluconacetobacter diazotrophicus (strain ATCC 49037 / DSM 5601 / CCUG 37298 / CIP 103539 / LMG 7603 / PAl5)).